Here is a 304-residue protein sequence, read N- to C-terminus: Nod factor export ATP-binding protein I (304 aa).

Residues 6–236 form the ABC transporter domain; that stretch reads IDFQQVEKRY…EIGCDVIEIY (231 aa). ATP is bound at residue 38–45; it reads GPNGAGKT.

This sequence belongs to the ABC transporter superfamily. Lipooligosaccharide exporter (TC 3.A.1.102) family. In terms of assembly, the complex is composed of two ATP-binding proteins (NodI) and two transmembrane proteins (NodJ).

The protein resides in the cell inner membrane. Part of the ABC transporter complex NodIJ involved in the export of the nodulation factors (Nod factors), the bacterial signal molecules that induce symbiosis and subsequent nodulation induction. Nod factors are LCO (lipo-chitin oligosaccharide), a modified beta-1,4-linked N-acetylglucosamine oligosaccharide. This subunit is responsible for energy coupling to the transport system. In Burkholderia pseudomallei (strain 1710b), this protein is Nod factor export ATP-binding protein I.